We begin with the raw amino-acid sequence, 248 residues long: Delayed minus-nitrogen induction protein 2 (248 aa).

4 helical membrane passes run 26 to 46 (IFSNAILGIAWLFLIFLCCSC), 110 to 130 (VHPVLLAIVVVFSTLSIVLTI), 144 to 164 (ISCLTTSTAACLLLALQMALA), and 186 to 206 (GVAAAVFGWISSGFFLLFSLI).

It belongs to the SUR7 family.

The protein localises to the membrane. This Schizosaccharomyces pombe (strain 972 / ATCC 24843) (Fission yeast) protein is Delayed minus-nitrogen induction protein 2 (dni2).